The primary structure comprises 962 residues: Protein lin-36 (962 aa).

Disordered stretches follow at residues 1–53 (MSEE…ETEG) and 74–99 (TSSG…PREE). The segment covering 23-40 (DSHVTVHSVEQDSQHSGE) has biased composition (basic and acidic residues). Polar residues predominate over residues 74–95 (TSSGEVLDESQVTPTKQASSSQ). The THAP-type zinc finger occupies 161–249 (LTHKPCTVCN…IEAFGVPVAI (89 aa)). Basic and acidic residues-rich tracts occupy residues 452-472 (KAEE…KHAE) and 534-570 (SHEE…DEQF). Disordered stretches follow at residues 452–575 (KAEE…KMVQ), 612–676 (IAAT…PEER), 744–788 (QEKG…SASS), and 932–962 (DPKW…DSQQ). Positions 626–637 (SSEQTPEPTTSQ) are enriched in low complexity. Residues 647–658 (KTKESAVQKVEK) are compositionally biased toward basic and acidic residues. A compositionally biased stretch (low complexity) spans 939–951 (QQQQQQQQQQQEQ). Residues 952-962 (FPGQGSSDSQQ) show a composition bias toward polar residues.

As to expression, expressed in vulval precursor P(3-8).p cells and their descendants, neurons of the head, tail and ventral cord, hypodermal and intestinal cells and germline cells.

The protein localises to the nucleus. Functionally, required to negatively regulate vulval development. Antagonizes Ras-mediated vulval induction. Acts cell autonomously. This is Protein lin-36 (lin-36) from Caenorhabditis elegans.